Consider the following 189-residue polypeptide: UPF0301 protein PFLU_5755 (189 aa).

Belongs to the UPF0301 (AlgH) family.

The sequence is that of UPF0301 protein PFLU_5755 from Pseudomonas fluorescens (strain SBW25).